A 360-amino-acid chain; its full sequence is Photosystem II protein D1 (360 aa).

Helical transmembrane passes span 29 to 46 (YIGWFGVLMIPCLLTATT), 118 to 133 (HFLLGVAAYMGREWEL), and 142 to 156 (WICVAFSAPVAAATA). His-118 contributes to the chlorophyll a binding site. A pheophytin a-binding site is contributed by Tyr-126. The [CaMn4O5] cluster site is built by Asp-170 and Glu-189. A helical membrane pass occupies residues 197–218 (FHMAGVAGVFGGALFSAMHGSL). His-198 lines the chlorophyll a pocket. A quinone contacts are provided by residues His-215 and 264 to 265 (SF). Fe cation is bound at residue His-215. Position 272 (His-272) interacts with Fe cation. The chain crosses the membrane as a helical span at residues 274 to 288 (FLGLWPVVGIWLTSI). The [CaMn4O5] cluster site is built by His-332, Glu-333, Asp-342, and Ala-344. The propeptide occupies 345–360 (DNSLLPVASSSPSINS).

The protein belongs to the reaction center PufL/M/PsbA/D family. In terms of assembly, PSII is composed of 1 copy each of membrane proteins PsbA, PsbB, PsbC, PsbD, PsbE, PsbF, PsbH, PsbI, PsbJ, PsbK, PsbL, PsbM, PsbT, PsbY, PsbZ, Psb30/Ycf12, at least 3 peripheral proteins of the oxygen-evolving complex and a large number of cofactors. It forms dimeric complexes. It depends on The D1/D2 heterodimer binds P680, chlorophylls that are the primary electron donor of PSII, and subsequent electron acceptors. It shares a non-heme iron and each subunit binds pheophytin, quinone, additional chlorophylls, carotenoids and lipids. D1 provides most of the ligands for the Mn4-Ca-O5 cluster of the oxygen-evolving complex (OEC). There is also a Cl(-1) ion associated with D1 and D2, which is required for oxygen evolution. The PSII complex binds additional chlorophylls, carotenoids and specific lipids. as a cofactor. Tyr-161 forms a radical intermediate that is referred to as redox-active TyrZ, YZ or Y-Z.

It localises to the plastid. The protein localises to the chloroplast thylakoid membrane. It carries out the reaction 2 a plastoquinone + 4 hnu + 2 H2O = 2 a plastoquinol + O2. Photosystem II (PSII) is a light-driven water:plastoquinone oxidoreductase that uses light energy to abstract electrons from H(2)O, generating O(2) and a proton gradient subsequently used for ATP formation. It consists of a core antenna complex that captures photons, and an electron transfer chain that converts photonic excitation into a charge separation. The D1/D2 (PsbA/PsbD) reaction center heterodimer binds P680, the primary electron donor of PSII as well as several subsequent electron acceptors. In Cyanidium caldarium (Red alga), this protein is Photosystem II protein D1.